The sequence spans 352 residues: 2'-dehydrokanamycin reductase (352 aa).

The protein belongs to the NAD(P)-dependent epimerase/dehydratase family.

The enzyme catalyses 2'-dehydrokanamycin A + NADPH + H(+) = kanamycin A + NADP(+). Its pathway is antibiotic biosynthesis; kanamycin biosynthesis. Functionally, mediates the conversion of 2'-dehydrokanamycin A into kanamycin A. This chain is 2'-dehydrokanamycin reductase (kanK), found in Streptomyces kanamyceticus.